Here is a 351-residue protein sequence, read N- to C-terminus: Glycerol-1-phosphate dehydrogenase [NAD(P)+] (351 aa).

Residues 97-101 (GTVID) and 119-122 (TSPS) each bind NAD(+). Asp-124 provides a ligand contact to substrate. Ser-128 serves as a coordination point for NAD(+). A substrate-binding site is contributed by Asp-171. Residues Asp-171 and His-251 each coordinate Zn(2+). Residue His-255 coordinates substrate. Zn(2+) is bound at residue His-267.

Belongs to the glycerol-1-phosphate dehydrogenase family. Homodimer. It depends on Zn(2+) as a cofactor.

The protein resides in the cytoplasm. The enzyme catalyses sn-glycerol 1-phosphate + NAD(+) = dihydroxyacetone phosphate + NADH + H(+). The catalysed reaction is sn-glycerol 1-phosphate + NADP(+) = dihydroxyacetone phosphate + NADPH + H(+). It participates in membrane lipid metabolism; glycerophospholipid metabolism. Its function is as follows. Catalyzes the NAD(P)H-dependent reduction of dihydroxyacetonephosphate (DHAP or glycerone phosphate) to glycerol 1-phosphate (G1P). The G1P thus generated is used as the glycerophosphate backbone of phospholipids in the cellular membranes of Archaea. The protein is Glycerol-1-phosphate dehydrogenase [NAD(P)+] of Sulfolobus acidocaldarius (strain ATCC 33909 / DSM 639 / JCM 8929 / NBRC 15157 / NCIMB 11770).